Reading from the N-terminus, the 96-residue chain is Myoglobin (96 aa).

In terms of domain architecture, Globin spans 1–96; that stretch reads GLSDGEWQLV…AKTKELGFLG (96 aa). Ser3 bears the Phosphoserine mark. Nitrite is bound at residue His61. O2 is bound at residue His61. A Phosphothreonine modification is found at Thr64.

The protein belongs to the globin family. In terms of assembly, monomeric.

The protein localises to the cytoplasm. Its subcellular location is the sarcoplasm. The catalysed reaction is Fe(III)-heme b-[protein] + nitric oxide + H2O = Fe(II)-heme b-[protein] + nitrite + 2 H(+). The enzyme catalyses H2O2 + AH2 = A + 2 H2O. Monomeric heme protein which primary function is to store oxygen and facilitate its diffusion within muscle tissues. Reversibly binds oxygen through a pentacoordinated heme iron and enables its timely and efficient release as needed during periods of heightened demand. Depending on the oxidative conditions of tissues and cells, and in addition to its ability to bind oxygen, it also has a nitrite reductase activity whereby it regulates the production of bioactive nitric oxide. Under stress conditions, like hypoxia and anoxia, it also protects cells against reactive oxygen species thanks to its pseudoperoxidase activity. The polypeptide is Myoglobin (MB) (Ailuropoda melanoleuca (Giant panda)).